A 489-amino-acid polypeptide reads, in one-letter code: Kynureninase 2 (489 aa).

Over residues 1 to 12 the composition is skewed to polar residues; that stretch reads MDASAAISQLRQ. Residues 1–25 form a disordered region; it reads MDASAAISQLRQGQKPEWPQNANTS. Pyridoxal 5'-phosphate-binding positions include Leu149, Thr150, 177-180, Asp261, His264, and Tyr286; that span reads FPSD. Residue Lys287 is modified to N6-(pyridoxal phosphate)lysine. Trp317 and Asn345 together coordinate pyridoxal 5'-phosphate.

Belongs to the kynureninase family. In terms of assembly, homodimer. Requires pyridoxal 5'-phosphate as cofactor.

The protein localises to the cytoplasm. The enzyme catalyses L-kynurenine + H2O = anthranilate + L-alanine + H(+). It catalyses the reaction 3-hydroxy-L-kynurenine + H2O = 3-hydroxyanthranilate + L-alanine + H(+). Its pathway is amino-acid degradation; L-kynurenine degradation; L-alanine and anthranilate from L-kynurenine: step 1/1. The protein operates within cofactor biosynthesis; NAD(+) biosynthesis; quinolinate from L-kynurenine: step 2/3. Functionally, catalyzes the cleavage of L-kynurenine (L-Kyn) and L-3-hydroxykynurenine (L-3OHKyn) into anthranilic acid (AA) and 3-hydroxyanthranilic acid (3-OHAA), respectively. The chain is Kynureninase 2 from Phaeosphaeria nodorum (strain SN15 / ATCC MYA-4574 / FGSC 10173) (Glume blotch fungus).